The sequence spans 89 residues: MIGSLKFNFILFLLISTMHMFWCHPISSSKVPGKSDYFVILLNSCPTRMDRRVGLDFLKPILEKTLMKRSFRNGVGTGMKKTSFRRAKS.

Residues 1-23 (MIGSLKFNFILFLLISTMHMFWC) form the signal peptide. A propeptide spanning residues 24–67 (HPISSSKVPGKSDYFVILLNSCPTRMDRRVGLDFLKPILEKTLM) is cleaved from the precursor.

The protein resides in the secreted. In terms of biological role, modulates arousal and anxiety. May play an important anorexigenic role. Binds to its receptor NPSR1 with nanomolar affinity to increase intracellular calcium concentrations. The polypeptide is Neuropeptide S (NPS) (Bos taurus (Bovine)).